A 587-amino-acid polypeptide reads, in one-letter code: Glutathione hydrolase proenzyme (587 aa).

Positions 1-28 (MKRTWNVCLTALLSVLLVAGSVPFHAEA) are cleaved as a signal peptide. The propeptide occupies 29–35 (KKPPKSY). Arg-113 contacts L-glutamate. Residue Thr-403 is the Nucleophile of the active site. Residues Thr-421, Glu-423, Glu-442, Asp-445, 464 to 465 (SS), and 485 to 486 (GG) contribute to the L-glutamate site.

This sequence belongs to the gamma-glutamyltransferase family. As to quaternary structure, this enzyme consists of two polypeptide chains, which are synthesized in precursor form from a single polypeptide. Cleaved by autocatalysis into a large and a small subunit.

The protein localises to the secreted. The catalysed reaction is an N-terminal (5-L-glutamyl)-[peptide] + an alpha-amino acid = 5-L-glutamyl amino acid + an N-terminal L-alpha-aminoacyl-[peptide]. The enzyme catalyses glutathione + H2O = L-cysteinylglycine + L-glutamate. It carries out the reaction an S-substituted glutathione + H2O = an S-substituted L-cysteinylglycine + L-glutamate. The protein operates within sulfur metabolism; glutathione metabolism. Cleaves the gamma-glutamyl bond of extracellular glutathione (gamma-Glu-Cys-Gly), glutathione conjugates, and other gamma-glutamyl compounds. The metabolism of glutathione releases free glutamate and the dipeptide cysteinyl-glycine, which is hydrolyzed to cysteine and glycine by dipeptidases. This Bacillus subtilis (strain 168) protein is Glutathione hydrolase proenzyme (ggt).